The following is a 286-amino-acid chain: Bifunctional protein FolD (286 aa).

Residues 164-166 (GRS), Ser-193, and Ile-234 each bind NADP(+).

This sequence belongs to the tetrahydrofolate dehydrogenase/cyclohydrolase family. As to quaternary structure, homodimer.

It carries out the reaction (6R)-5,10-methylene-5,6,7,8-tetrahydrofolate + NADP(+) = (6R)-5,10-methenyltetrahydrofolate + NADPH. It catalyses the reaction (6R)-5,10-methenyltetrahydrofolate + H2O = (6R)-10-formyltetrahydrofolate + H(+). Its pathway is one-carbon metabolism; tetrahydrofolate interconversion. Functionally, catalyzes the oxidation of 5,10-methylenetetrahydrofolate to 5,10-methenyltetrahydrofolate and then the hydrolysis of 5,10-methenyltetrahydrofolate to 10-formyltetrahydrofolate. This Maridesulfovibrio salexigens (strain ATCC 14822 / DSM 2638 / NCIMB 8403 / VKM B-1763) (Desulfovibrio salexigens) protein is Bifunctional protein FolD.